The sequence spans 434 residues: Monodehydroascorbate reductase, seedling isozyme (434 aa).

FAD contacts are provided by residues 13-16, glutamate 40, arginine 47, lysine 52, isoleucine 95, and 146-147; these read GGVA and RE. Residues 171–177, glutamate 195, arginine 201, and glycine 260 each bind NAD(+); that span reads GGYIGLE. 173 to 177 serves as a coordination point for NADP(+); it reads YIGLE. NADP(+)-binding residues include arginine 201 and glycine 260. An FAD-binding site is contributed by aspartate 297. An NAD(+)-binding site is contributed by 313–314; it reads EH. An NADP(+)-binding site is contributed by 313 to 314; sequence EH. Valine 315 lines the FAD pocket. Residue arginine 319 coordinates L-ascorbate. Residue tyrosine 348 participates in FAD binding. Residue tyrosine 348 coordinates NAD(+). Residue tyrosine 348 participates in NADP(+) binding. Arginine 350 contacts L-ascorbate.

Belongs to the FAD-dependent oxidoreductase family. The cofactor is FAD.

Its subcellular location is the cytoplasm. It carries out the reaction 2 monodehydro-L-ascorbate radical + NADH + H(+) = 2 L-ascorbate + NAD(+). Functionally, catalyzes the conversion of monodehydroascorbate to ascorbate, oxidizing NADH in the process. The polypeptide is Monodehydroascorbate reductase, seedling isozyme (Cucumis sativus (Cucumber)).